Here is a 148-residue protein sequence, read N- to C-terminus: MSSQNTSNSRHPASSASALPNRTNTARRSTSPRTSTGSSSTNTNTKTVDHAGTTFISSTSKRGRSTKAGSVHSVPMKRTKRVRRTPAQRIEHENKENIQTEKVYRIKPVQRVLSPSDLTNELTILDLFHVPRPNETFDITDRVNNTSR.

Residues 1 to 20 (MSSQNTSNSRHPASSASALP) show a composition bias toward polar residues. Residues 1-96 (MSSQNTSNSR…AQRIEHENKE (96 aa)) are disordered. Low complexity predominate over residues 21–46 (NRTNTARRSTSPRTSTGSSSTNTNTK). Residues 75-86 (PMKRTKRVRRTP) show a composition bias toward basic residues.

Its function is as follows. Acts as a critical meiotic inducer by binding non-covalently to protein kinase ran1/pat1 inhibiting its enzymatic activity. Inhibits ran1/pat1 by acting as a pseudosubstrate for ran1/pat1 instead of its natural substrate ste11. Inactivation of the ran1/pat1 protein kinase is both necessary and sufficient to divert a vegetative cell from mitotic division to meiotic differentiation. This Schizosaccharomyces pombe (strain 972 / ATCC 24843) (Fission yeast) protein is Meiosis inducing protein mei3.